Consider the following 253-residue polypeptide: Triosephosphate isomerase (253 aa).

A substrate-binding site is contributed by 9–11; the sequence is NWK. The active-site Electrophile is histidine 94. Glutamate 163 serves as the catalytic Proton acceptor. Substrate is bound by residues glycine 169, serine 209, and 230–231; that span reads GG.

This sequence belongs to the triosephosphate isomerase family. As to quaternary structure, homodimer.

Its subcellular location is the cytoplasm. It catalyses the reaction D-glyceraldehyde 3-phosphate = dihydroxyacetone phosphate. It functions in the pathway carbohydrate biosynthesis; gluconeogenesis. Its pathway is carbohydrate degradation; glycolysis; D-glyceraldehyde 3-phosphate from glycerone phosphate: step 1/1. In terms of biological role, involved in the gluconeogenesis. Catalyzes stereospecifically the conversion of dihydroxyacetone phosphate (DHAP) to D-glyceraldehyde-3-phosphate (G3P). This chain is Triosephosphate isomerase, found in Dehalococcoides mccartyi (strain ATCC BAA-2100 / JCM 16839 / KCTC 5957 / BAV1).